The chain runs to 1619 residues: ATP-dependent helicase ULS1 (1619 aa).

An SUMO interacting motif; type a 1 motif is present at residues 7–10; that stretch reads IDLT. Positions 86-102 are enriched in polar residues; that stretch reads STFNNEKSSNEVKQQQV. Disordered stretches follow at residues 86 to 123, 200 to 279, 347 to 371, and 429 to 450; these read STFN…SSPS, NNKP…VESS, PILP…NSSI, and SGSN…SVLQ. The span at 103–118 shows a compositional bias: basic and acidic residues; that stretch reads LKEETMGSSNDEKKTQ. At Ser121 the chain carries Phosphoserine. The span at 200-210 shows a compositional bias: polar residues; it reads NNKPSQQQFSD. A compositionally biased stretch (basic and acidic residues) spans 211–226; the sequence is PETKDNSLKSENKDQI. 2 stretches are compositionally biased toward polar residues: residues 242–259 and 269–279; these read SAFQ…TIPN and LPSNLSSVESS. Residues 353–366 are compositionally biased toward basic and acidic residues; the sequence is NMDHTTHNSHDSEQ. The SUMO interacting motif; type b 1 signature appears at 371–378; sequence IIILSDED. The short motif at 470-473 is the SUMO interacting motif; type a 2 element; the sequence is LDTL. The SUMO interacting motif; type b 2 signature appears at 543-550; the sequence is ILVDEAEN. A Helicase ATP-binding domain is found at 956–1157; sequence QVENSAKKGG…YSLIRFLRIP (202 aa). 969–976 serves as a coordination point for ATP; that stretch reads DDMGLGKT. An RING-type zinc finger spans residues 1330 to 1386; that stretch reads CFWCMEQLEPEAMSVLTGCGHLICDTCIEPFIEESSMLPQAKKTKGGAFAIPCKDCQ. The 160-residue stretch at 1447–1606 folds into the Helicase C-terminal domain; it reads QCIQVIQRVF…GKIKEVNSLG (160 aa).

It belongs to the SNF2/RAD54 helicase family. As to quaternary structure, interacts with CDC3, CDC11, EBP2, SIR4, UBC4 and SUMO/SMT3.

Its subcellular location is the nucleus. Its function is as follows. ATP-dependent helicase involved mating type switching and in silencing interference through its interaction with the silencing regulator SIR4. Cooperates with UBC4 and UBC5 to mediate ubiquitination of SUMO conjugates. The protein is ATP-dependent helicase ULS1 (ULS1) of Saccharomyces cerevisiae (strain ATCC 204508 / S288c) (Baker's yeast).